The sequence spans 416 residues: UDP-N-acetylmuramoylalanine--D-glutamate ligase (416 aa).

Residue 108–114 (GTVGKTT) coordinates ATP.

It belongs to the MurCDEF family.

Its subcellular location is the cytoplasm. The enzyme catalyses UDP-N-acetyl-alpha-D-muramoyl-L-alanine + D-glutamate + ATP = UDP-N-acetyl-alpha-D-muramoyl-L-alanyl-D-glutamate + ADP + phosphate + H(+). Its pathway is cell wall biogenesis; peptidoglycan biosynthesis. Its function is as follows. Cell wall formation. Catalyzes the addition of glutamate to the nucleotide precursor UDP-N-acetylmuramoyl-L-alanine (UMA). This Chlamydia muridarum (strain MoPn / Nigg) protein is UDP-N-acetylmuramoylalanine--D-glutamate ligase.